A 241-amino-acid chain; its full sequence is Ribosomal RNA small subunit methyltransferase J (241 aa).

S-adenosyl-L-methionine is bound by residues 94 to 95 (RD) and D163.

The protein belongs to the methyltransferase superfamily. RsmJ family.

It localises to the cytoplasm. The enzyme catalyses guanosine(1516) in 16S rRNA + S-adenosyl-L-methionine = N(2)-methylguanosine(1516) in 16S rRNA + S-adenosyl-L-homocysteine + H(+). Its function is as follows. Specifically methylates the guanosine in position 1516 of 16S rRNA. This chain is Ribosomal RNA small subunit methyltransferase J, found in Francisella tularensis subsp. novicida (strain U112).